The primary structure comprises 915 residues: Translation initiation factor IF-2 (915 aa).

Disordered regions lie at residues methionine 1–threonine 105 and valine 121–isoleucine 295. Residues proline 57–glycine 81 show a composition bias toward low complexity. Residues arginine 84–glycine 101 are compositionally biased toward gly residues. 2 stretches are compositionally biased toward basic and acidic residues: residues valine 121–lysine 135 and glutamate 143–alanine 180. A compositionally biased stretch (pro residues) spans alanine 186–alanine 195. Composition is skewed to low complexity over residues alanine 201–alanine 213 and lysine 230–proline 239. The segment covering arginine 243 to lysine 256 has biased composition (basic and acidic residues). The segment covering proline 266 to lysine 278 has biased composition (low complexity). Basic and acidic residues predominate over residues alanine 279 to isoleucine 295. In terms of domain architecture, tr-type G spans proline 414–lysine 584. The segment at glycine 423–threonine 430 is G1. Glycine 423–threonine 430 provides a ligand contact to GTP. The G2 stretch occupies residues glycine 448–histidine 452. The segment at aspartate 470–glycine 473 is G3. Residues aspartate 470–histidine 474 and asparagine 524–aspartate 527 each bind GTP. Residues asparagine 524 to aspartate 527 are G4. The segment at serine 560 to leucine 562 is G5.

It belongs to the TRAFAC class translation factor GTPase superfamily. Classic translation factor GTPase family. IF-2 subfamily.

Its subcellular location is the cytoplasm. In terms of biological role, one of the essential components for the initiation of protein synthesis. Protects formylmethionyl-tRNA from spontaneous hydrolysis and promotes its binding to the 30S ribosomal subunits. Also involved in the hydrolysis of GTP during the formation of the 70S ribosomal complex. This Granulibacter bethesdensis (strain ATCC BAA-1260 / CGDNIH1) protein is Translation initiation factor IF-2.